We begin with the raw amino-acid sequence, 1394 residues long: Tubulin glycylase 3E (1394 aa).

Disordered regions lie at residues 201 to 230 (KKKS…QRKE), 563 to 582 (NQKD…QNSI), 620 to 663 (DENE…TSNF), and 682 to 706 (STVK…NLKE). The span at 205-216 (NFQNKSQSQLNN) shows a compositional bias: low complexity. Over residues 217–230 (HKNEEKKPSQQRKE) the composition is skewed to basic and acidic residues. A compositionally biased stretch (low complexity) spans 568–582 (QSNQTSSVISQQNSI). Residues 627-655 (KENVLQQKKNQSNQIVTSQQQSNNYFKQE) are compositionally biased toward polar residues. Positions 682 to 703 (STVKNSDNNNQNQTNPQNQNTN) are enriched in low complexity. Residues 911–1250 (RFIFNITVIA…QNNLQEDLEI (340 aa)) form the TTL domain. ATP contacts are provided by residues 1058 to 1061 (QKYI), Lys1079, and Asp1081. 2 IQ domains span residues 1320–1349 (QYWG…QKFT) and 1348–1377 (FTFA…QQQT).

It localises to the cell projection. Its subcellular location is the cilium. The protein localises to the cytoplasm. It is found in the cytoskeleton. The protein resides in the cilium axoneme. In terms of biological role, probable glycylase which modifies tubulin, generating side chains of glycine on the gamma-carboxyl groups of specific glutamate residues within the C-terminal tail of tubulin. This chain is Tubulin glycylase 3E (TTLL3E), found in Tetrahymena thermophila (strain SB210).